We begin with the raw amino-acid sequence, 55 residues long: Large ribosomal subunit protein bL33 (55 aa).

The protein belongs to the bacterial ribosomal protein bL33 family.

The chain is Large ribosomal subunit protein bL33 from Jannaschia sp. (strain CCS1).